A 711-amino-acid chain; its full sequence is Long-chain-fatty-acid--CoA ligase 4 (711 aa).

The helical; Signal-anchor for type III membrane protein transmembrane segment at 8–28 (LTIILLPVHLLITIYSALIFI) threads the bilayer. The Cytoplasmic portion of the chain corresponds to 29-711 (PWYFLTNAKK…KDIERMYGGK (683 aa)). Position 447 is a phosphoserine (S447).

It belongs to the ATP-dependent AMP-binding enzyme family. Requires Mg(2+) as cofactor.

It is found in the mitochondrion outer membrane. Its subcellular location is the peroxisome membrane. The protein resides in the microsome membrane. The protein localises to the endoplasmic reticulum membrane. It localises to the cell membrane. The catalysed reaction is a long-chain fatty acid + ATP + CoA = a long-chain fatty acyl-CoA + AMP + diphosphate. The enzyme catalyses (5Z,8Z,11Z,14Z)-eicosatetraenoate + ATP + CoA = (5Z,8Z,11Z,14Z)-eicosatetraenoyl-CoA + AMP + diphosphate. It catalyses the reaction hexadecanoate + ATP + CoA = hexadecanoyl-CoA + AMP + diphosphate. It carries out the reaction (E)-hexadec-2-enoate + ATP + CoA = (2E)-hexadecenoyl-CoA + AMP + diphosphate. The catalysed reaction is 15-hydroxy-(5Z,8Z,11Z,13E)-eicosatetraenoate + ATP + CoA = 15-hydroxy-(5Z,8Z,11Z,13E)-eicosatetraenoyl-CoA + AMP + diphosphate. The enzyme catalyses 12-hydroxy-(5Z,8Z,10E,14Z)-eicosatetraenoate + ATP + CoA = 12-hydroxy-(5Z,8Z,10E,14Z)-eicosatetraenoyl-CoA + AMP + diphosphate. It catalyses the reaction 5-hydroxy-(6E,8Z,11Z,14Z)-eicosatetraenoate + ATP + CoA = 5-hydroxy-(6E,8Z,11Z,14Z)-eicosatetraenoyl-CoA + AMP + diphosphate. It carries out the reaction 5,6-epoxy-(8Z,11Z,14Z)-eicosatrienoate + ATP + CoA = 5,6-epoxy-(8Z,11Z,14Z)-eicosatrienoyl-CoA + AMP + diphosphate. The catalysed reaction is 14,15-epoxy-(5Z,8Z,11Z)-eicosatrienoate + ATP + CoA = 14,15-epoxy-(5Z,8Z,11Z)-eicosatrienoyl-CoA + AMP + diphosphate. The enzyme catalyses 11,12-epoxy-(5Z,8Z,14Z)-eicosatrienoate + ATP + CoA = 11,12-epoxy-(5Z,8Z,14Z)-eicosatrienoyl-CoA + AMP + diphosphate. It catalyses the reaction 8,9-epoxy-(5Z,11Z,14Z)-eicosatrienoate + ATP + CoA = 8,9-epoxy-(5Z,11Z,14Z)-eicosatrienoyl-CoA + AMP + diphosphate. With respect to regulation, both triacsin C and rosiglitazone inhibit arachidonoyl-CoA ligase activity. Catalyzes the conversion of long-chain fatty acids to their active form acyl-CoA for both synthesis of cellular lipids, and degradation via beta-oxidation. Preferentially activates arachidonate and eicosapentaenoate as substrates. Preferentially activates 8,9-EET &gt; 14,15-EET &gt; 5,6-EET &gt; 11,12-EET. Modulates glucose-stimulated insulin secretion by regulating the levels of unesterified EETs. Modulates prostaglandin E2 secretion. This Homo sapiens (Human) protein is Long-chain-fatty-acid--CoA ligase 4 (ACSL4).